A 189-amino-acid polypeptide reads, in one-letter code: Peptidyl-tRNA hydrolase (189 aa).

Residue Tyr-15 coordinates tRNA. His-20 functions as the Proton acceptor in the catalytic mechanism. Phe-66, Asn-68, and Asn-114 together coordinate tRNA.

It belongs to the PTH family. In terms of assembly, monomer.

It is found in the cytoplasm. The catalysed reaction is an N-acyl-L-alpha-aminoacyl-tRNA + H2O = an N-acyl-L-amino acid + a tRNA + H(+). Its function is as follows. Hydrolyzes ribosome-free peptidyl-tRNAs (with 1 or more amino acids incorporated), which drop off the ribosome during protein synthesis, or as a result of ribosome stalling. In terms of biological role, catalyzes the release of premature peptidyl moieties from peptidyl-tRNA molecules trapped in stalled 50S ribosomal subunits, and thus maintains levels of free tRNAs and 50S ribosomes. This chain is Peptidyl-tRNA hydrolase, found in Acidithiobacillus ferrooxidans (strain ATCC 23270 / DSM 14882 / CIP 104768 / NCIMB 8455) (Ferrobacillus ferrooxidans (strain ATCC 23270)).